Consider the following 173-residue polypeptide: 2-C-methyl-D-erythritol 2,4-cyclodiphosphate synthase (173 aa).

A divalent metal cation-binding residues include Asp17 and His19. 4-CDP-2-C-methyl-D-erythritol 2-phosphate contacts are provided by residues 17-19 (DVH) and 49-50 (HS). A divalent metal cation is bound at residue His57. Residues 76-80 (FPNTD), 147-150 (TTTE), Phe154, and Arg157 each bind 4-CDP-2-C-methyl-D-erythritol 2-phosphate.

This sequence belongs to the IspF family. In terms of assembly, homotrimer. A divalent metal cation is required as a cofactor.

The enzyme catalyses 4-CDP-2-C-methyl-D-erythritol 2-phosphate = 2-C-methyl-D-erythritol 2,4-cyclic diphosphate + CMP. Its pathway is isoprenoid biosynthesis; isopentenyl diphosphate biosynthesis via DXP pathway; isopentenyl diphosphate from 1-deoxy-D-xylulose 5-phosphate: step 4/6. Involved in the biosynthesis of isopentenyl diphosphate (IPP) and dimethylallyl diphosphate (DMAPP), two major building blocks of isoprenoid compounds. Catalyzes the conversion of 4-diphosphocytidyl-2-C-methyl-D-erythritol 2-phosphate (CDP-ME2P) to 2-C-methyl-D-erythritol 2,4-cyclodiphosphate (ME-CPP) with a corresponding release of cytidine 5-monophosphate (CMP). The protein is 2-C-methyl-D-erythritol 2,4-cyclodiphosphate synthase of Ehrlichia canis (strain Jake).